Consider the following 931-residue polypeptide: Neuropilin-2 (931 aa).

The signal sequence occupies residues 1–20; it reads MDMFPLTWVFLALYFSGHEV. The Extracellular portion of the chain corresponds to 21 to 864; sequence RSQQDPPCGG…EKSWLYTLDP (844 aa). Intrachain disulfides connect cysteine 28-cysteine 55, cysteine 83-cysteine 105, and cysteine 149-cysteine 175. CUB domains are found at residues 28–142 and 149–267; these read CGGR…YEIF and CSKN…YYLI. 2 N-linked (GlcNAc...) asparagine glycosylation sites follow: asparagine 152 and asparagine 157. Ca(2+)-binding residues include glutamate 197, aspartate 211, and aspartate 252. Cysteine 208 and cysteine 230 are joined by a disulfide. Disulfide bonds link cysteine 277/cysteine 427 and cysteine 434/cysteine 592. F5/8 type C domains follow at residues 277–427 and 434–592; these read CNVP…LFGC and CSNM…VLGC. Residues 298-310 show a composition bias toward polar residues; the sequence is TFSDGRWTPQQSR. The segment at 298–317 is disordered; it reads TFSDGRWTPQQSRLHGDDNG. The segment at 601–621 is disordered; that stretch reads VETLGPTVKSEETTTPYPMDE. N-linked (GlcNAc...) asparagine glycosylation is present at asparagine 629. The 161-residue stretch at 642 to 802 folds into the MAM domain; it reads SGFNCNFDFP…TDVPLENCME (161 aa). The disordered stretch occupies residues 819 to 854; that stretch reads THGGEGYEDEIDDEYEGDWSNSSSSTSGAGDPSSGK. Residues 824-835 show a composition bias toward acidic residues; sequence GYEDEIDDEYEG. The span at 836–851 shows a compositional bias: low complexity; that stretch reads DWSNSSSSTSGAGDPS. Asparagine 839 carries N-linked (GlcNAc...) asparagine glycosylation. Residues 865 to 889 traverse the membrane as a helical segment; sequence ILITIIAMSSLGVLLGATCAGLLLY. Residues 890–931 lie on the Cytoplasmic side of the membrane; it reads CTCSYSGLSSRSCTTLENYNFELYDGLKHKVKINHQKCCSEA.

Belongs to the neuropilin family. In terms of assembly, heterodimer with NRP1. Binds PLXNB1. As to expression, expressed in developing CNS, PNS and in some nonneural tissues including limb buds, developing bones, muscles, intestinal epithelium, kidney, lung and submandibular gland.

It localises to the membrane. Its function is as follows. High affinity receptor for semaphorins 3C, 3F, VEGF-165 and VEGF-145 isoforms of VEGF, and the PLGF-2 isoform of PGF. This Mus musculus (Mouse) protein is Neuropilin-2 (Nrp2).